We begin with the raw amino-acid sequence, 186 residues long: ATP synthase subunit delta (186 aa).

It belongs to the ATPase delta chain family. As to quaternary structure, F-type ATPases have 2 components, F(1) - the catalytic core - and F(0) - the membrane proton channel. F(1) has five subunits: alpha(3), beta(3), gamma(1), delta(1), epsilon(1). F(0) has three main subunits: a(1), b(2) and c(10-14). The alpha and beta chains form an alternating ring which encloses part of the gamma chain. F(1) is attached to F(0) by a central stalk formed by the gamma and epsilon chains, while a peripheral stalk is formed by the delta and b chains.

Its subcellular location is the cell inner membrane. In terms of biological role, f(1)F(0) ATP synthase produces ATP from ADP in the presence of a proton or sodium gradient. F-type ATPases consist of two structural domains, F(1) containing the extramembraneous catalytic core and F(0) containing the membrane proton channel, linked together by a central stalk and a peripheral stalk. During catalysis, ATP synthesis in the catalytic domain of F(1) is coupled via a rotary mechanism of the central stalk subunits to proton translocation. Its function is as follows. This protein is part of the stalk that links CF(0) to CF(1). It either transmits conformational changes from CF(0) to CF(1) or is implicated in proton conduction. The protein is ATP synthase subunit delta of Mesorhizobium japonicum (strain LMG 29417 / CECT 9101 / MAFF 303099) (Mesorhizobium loti (strain MAFF 303099)).